A 489-amino-acid chain; its full sequence is Adenylosuccinate synthetase 2, chloroplastic (489 aa).

The transit peptide at 1-54 (MPLASLSLDPAPFPLIRPAAGWSGRVLPVPGPAPRLCRPLRAAPVAPATTDEPS) directs the protein to the chloroplast. Residues 76–82 (GDEGKGK) and 104–106 (GHT) each bind GTP. The active-site Proton acceptor is Asp77. 2 residues coordinate Mg(2+): Asp77 and Gly104. IMP-binding positions include 77 to 80 (DEGK), 102 to 105 (NAGH), Thr194, Arg208, Gln288, Thr303, and Arg367. His105 acts as the Proton donor in catalysis. A substrate-binding site is contributed by 363–369 (TTTGRPR). Residues Arg369, 395–397 (KLD), and 478–480 (GVG) contribute to the GTP site.

This sequence belongs to the adenylosuccinate synthetase family. In terms of assembly, homodimer. The cofactor is Mg(2+).

Its subcellular location is the plastid. It localises to the chloroplast. The catalysed reaction is IMP + L-aspartate + GTP = N(6)-(1,2-dicarboxyethyl)-AMP + GDP + phosphate + 2 H(+). It participates in purine metabolism; AMP biosynthesis via de novo pathway; AMP from IMP: step 1/2. In terms of biological role, plays an important role in the de novo pathway and in the salvage pathway of purine nucleotide biosynthesis. Catalyzes the first committed step in the biosynthesis of AMP from IMP. The protein is Adenylosuccinate synthetase 2, chloroplastic of Sorghum bicolor (Sorghum).